We begin with the raw amino-acid sequence, 321 residues long: Fe-S cluster assembly protein DRE2 (321 aa).

The N-terminal SAM-like domain stretch occupies residues 1–140; it reads MNNTAHSMSE…RRPASSSVAE (140 aa). Over residues 128 to 138 the composition is skewed to polar residues; that stretch reads IESRRPASSSV. The segment at 128–166 is disordered; the sequence is IESRRPASSSVAEKDSTASSGMGAVKLRRKPNENGGHQQ. Residues 140–177 are linker; that stretch reads EKDSTASSGMGAVKLRRKPNENGGHQQKKALLWATQPE. Residues cysteine 202, cysteine 217, cysteine 220, and cysteine 222 each coordinate [2Fe-2S] cluster. Positions 202–222 are fe-S binding site A; that stretch reads CTVDFSAPRTRRKRACKGCTC. The interval 239–263 is disordered; it reads QLDPSEVGGTGGKRTEVTTTVKGPN. Positions 283, 286, 294, and 297 each coordinate [4Fe-4S] cluster. Short sequence motifs (cx2C motif) lie at residues 283–286 and 294–297; these read CGSC and CSSC. The tract at residues 283–297 is fe-S binding site B; sequence CGSCFLGDAFRCSSC.

This sequence belongs to the anamorsin family. As to quaternary structure, monomer. Interacts with TAH18. Interacts with MIA40. It depends on [2Fe-2S] cluster as a cofactor. Requires [4Fe-4S] cluster as cofactor.

Its subcellular location is the cytoplasm. It localises to the mitochondrion intermembrane space. Functionally, component of the cytosolic iron-sulfur (Fe-S) protein assembly (CIA) machinery required for the maturation of extramitochondrial Fe-S proteins. Part of an electron transfer chain functioning in an early step of cytosolic Fe-S biogenesis, facilitating the de novo assembly of a [4Fe-4S] cluster on the scaffold complex CFD1-NBP35. Electrons are transferred to DRE2 from NADPH via the FAD- and FMN-containing protein TAH18. TAH18-DRE2 are also required for the assembly of the diferric tyrosyl radical cofactor of ribonucleotide reductase (RNR), probably by providing electrons for reduction during radical cofactor maturation in the catalytic small subunit RNR2. The polypeptide is Fe-S cluster assembly protein DRE2 (Malassezia globosa (strain ATCC MYA-4612 / CBS 7966) (Dandruff-associated fungus)).